Reading from the N-terminus, the 423-residue chain is Sulfate adenylyltransferase (423 aa).

Residues Gln-207 and Arg-209 each coordinate sulfate. ATP-binding positions include 207–210 (QLRN) and 301–304 (GRDH). Residues Arg-209 and Asn-210 contribute to the active site. Ala-305 contacts sulfate.

Belongs to the sulfate adenylyltransferase family.

Its subcellular location is the mitosome. The catalysed reaction is sulfate + ATP + H(+) = adenosine 5'-phosphosulfate + diphosphate. The protein operates within sulfur metabolism; hydrogen sulfide biosynthesis; sulfite from sulfate: step 1/3. Catalyzes the first intracellular reaction of sulfate assimilation, forming adenosine-5'-phosphosulfate (APS) from inorganic sulfate and ATP. In Entamoeba histolytica (strain ATCC 30459 / HM-1:IMSS / ABRM), this protein is Sulfate adenylyltransferase.